Reading from the N-terminus, the 141-residue chain is Ribosomal RNA large subunit methyltransferase H (141 aa).

Position 88 (glycine 88) interacts with S-adenosyl-L-methionine.

This sequence belongs to the RNA methyltransferase RlmH family. In terms of assembly, homodimer.

The protein resides in the cytoplasm. The catalysed reaction is pseudouridine(1915) in 23S rRNA + S-adenosyl-L-methionine = N(3)-methylpseudouridine(1915) in 23S rRNA + S-adenosyl-L-homocysteine + H(+). In terms of biological role, specifically methylates the pseudouridine at position 1915 (m3Psi1915) in 23S rRNA. The sequence is that of Ribosomal RNA large subunit methyltransferase H from Novosphingobium aromaticivorans (strain ATCC 700278 / DSM 12444 / CCUG 56034 / CIP 105152 / NBRC 16084 / F199).